The primary structure comprises 162 residues: Cytochrome c-type biogenesis protein CcmE (162 aa).

Topologically, residues 1-13 (MSFWPQSRKARRR) are cytoplasmic. The helical; Signal-anchor for type II membrane protein transmembrane segment at 14-34 (LTILLAIAPVLALAVGLALYG) threads the bilayer. The Periplasmic portion of the chain corresponds to 35 to 162 (LRDSISLFYT…DAPAYGSQKP (128 aa)). The heme site is built by His128 and Tyr132. Basic and acidic residues predominate over residues 140–151 (ALKEQGEWRGEG). The interval 140-162 (ALKEQGEWRGEGADAPAYGSQKP) is disordered.

It belongs to the CcmE/CycJ family.

Its subcellular location is the cell inner membrane. Functionally, heme chaperone required for the biogenesis of c-type cytochromes. Transiently binds heme delivered by CcmC and transfers the heme to apo-cytochromes in a process facilitated by CcmF and CcmH. The sequence is that of Cytochrome c-type biogenesis protein CcmE from Caulobacter vibrioides (strain ATCC 19089 / CIP 103742 / CB 15) (Caulobacter crescentus).